Consider the following 229-residue polypeptide: Calcyclin-binding protein (229 aa).

At alanine 2 the chain carries N-acetylalanine. The segment at 2–81 (ASALEELQKD…YTVKISNYGW (80 aa)) is interaction with SIAH1. Serine 3 is subject to Phosphoserine. An N6-acetyllysine mark is found at lysine 10 and lysine 21. Residue serine 36 is modified to Phosphoserine. Positions 38-59 (IETELRNKMQQKSQKKPEFDNE) are disordered. The region spanning 74 to 168 (VKISNYGWDQ…AENTRWDYLT (95 aa)) is the CS domain. Positions 74-229 (VKISNYGWDQ…EKQAREDTEF (156 aa)) are interaction with SKP1. An N6-acetyllysine mark is found at lysine 86 and lysine 119. Residues 155–229 (CRKKAENTRW…EKQAREDTEF (75 aa)) are interaction with S100A6. The region spanning 169 to 229 (QVEKECKEKE…EKQAREDTEF (61 aa)) is the SGS domain.

In terms of assembly, component of some large E3 complex at least composed of UBE2D1, SIAH1, CACYBP/SIP, SKP1, APC and TBL1X. Interacts directly with SIAH1, SIAH2 and SKP1. Interacts with protein of the S100 family S100A1, S100A6, S100B, S100P and S100A12 in a calcium-dependent manner. Phosphorylated on serine residues. Phosphorylated upon induction by RA or at high calcium concentrations.

Its subcellular location is the nucleus. The protein resides in the cytoplasm. Functionally, may be involved in calcium-dependent ubiquitination and subsequent proteasomal degradation of target proteins. Probably serves as a molecular bridge in ubiquitin E3 complexes. Participates in the ubiquitin-mediated degradation of beta-catenin (CTNNB1). This chain is Calcyclin-binding protein (Cacybp), found in Rattus norvegicus (Rat).